The primary structure comprises 352 residues: Photosystem II D2 protein (352 aa).

Position 2 is an N-acetylthreonine (threonine 2). Threonine 2 is modified (phosphothreonine). The helical transmembrane segment at 40–60 (CAYMALGGWLTGTTFVTSWYT) threads the bilayer. Residue histidine 117 coordinates chlorophyll a. A helical membrane pass occupies residues 124–140 (GFMLRQFEIAQSLKLRP). Residues glutamine 129 and asparagine 142 each coordinate pheophytin a. Residues 152–165 (VFVSVFLIYPLGQA) traverse the membrane as a helical segment. Residue histidine 197 participates in chlorophyll a binding. A helical transmembrane segment spans residues 207 to 227 (AALLCAIHGATVENTLFEDGD). Histidine 214 and phenylalanine 261 together coordinate a plastoquinone. Residue histidine 214 participates in Fe cation binding. Fe cation is bound at residue histidine 268. Residues 278–294 (GLWMSAIGVVGLALNLR) form a helical membrane-spanning segment.

It belongs to the reaction center PufL/M/PsbA/D family. As to quaternary structure, PSII is composed of 1 copy each of membrane proteins PsbA, PsbB, PsbC, PsbD, PsbE, PsbF, PsbH, PsbI, PsbJ, PsbK, PsbL, PsbM, PsbT, PsbX, PsbY, PsbZ, Psb30/Ycf12, at least 3 peripheral proteins of the oxygen-evolving complex and a large number of cofactors. It forms dimeric complexes. Requires The D1/D2 heterodimer binds P680, chlorophylls that are the primary electron donor of PSII, and subsequent electron acceptors. It shares a non-heme iron and each subunit binds pheophytin, quinone, additional chlorophylls, carotenoids and lipids. There is also a Cl(-1) ion associated with D1 and D2, which is required for oxygen evolution. The PSII complex binds additional chlorophylls, carotenoids and specific lipids. as cofactor.

Its subcellular location is the plastid. The protein localises to the chloroplast thylakoid membrane. The enzyme catalyses 2 a plastoquinone + 4 hnu + 2 H2O = 2 a plastoquinol + O2. Photosystem II (PSII) is a light-driven water:plastoquinone oxidoreductase that uses light energy to abstract electrons from H(2)O, generating O(2) and a proton gradient subsequently used for ATP formation. It consists of a core antenna complex that captures photons, and an electron transfer chain that converts photonic excitation into a charge separation. The D1/D2 (PsbA/PsbD) reaction center heterodimer binds P680, the primary electron donor of PSII as well as several subsequent electron acceptors. D2 is needed for assembly of a stable PSII complex. The polypeptide is Photosystem II D2 protein (Stigeoclonium helveticum (Green alga)).